Reading from the N-terminus, the 451-residue chain is ATP-dependent protease ATPase subunit HslU (451 aa).

ATP is bound by residues Ile26, 68–73, Asp263, Glu328, and Arg400; that span reads GVGKTE.

The protein belongs to the ClpX chaperone family. HslU subfamily. In terms of assembly, a double ring-shaped homohexamer of HslV is capped on each side by a ring-shaped HslU homohexamer. The assembly of the HslU/HslV complex is dependent on binding of ATP.

Its subcellular location is the cytoplasm. In terms of biological role, ATPase subunit of a proteasome-like degradation complex; this subunit has chaperone activity. The binding of ATP and its subsequent hydrolysis by HslU are essential for unfolding of protein substrates subsequently hydrolyzed by HslV. HslU recognizes the N-terminal part of its protein substrates and unfolds these before they are guided to HslV for hydrolysis. The sequence is that of ATP-dependent protease ATPase subunit HslU from Dichelobacter nodosus (strain VCS1703A).